A 142-amino-acid polypeptide reads, in one-letter code: MAARMTIMLPLAVALICLLQTEPGMAAHSHIRKVLQLFRSIELDDSKKSFYLTAAKYGIQTQLREPLVRFAGGFAPSTRLSEACVKNAIARIYEIEGEFYAKFSYACENHDPYSVECLEEAQDDYPTKLGELFKKTKKCLRE.

The N-terminal stretch at 1 to 26 (MAARMTIMLPLAVALICLLQTEPGMA) is a signal peptide. Disulfide bonds link Cys84/Cys139 and Cys107/Cys117.

The protein localises to the secreted. In terms of biological role, salivary protein that moderately inhibits the alternative pathway for complement system activation in the host. In Anopheles darlingi (Mosquito), this protein is gSG7 salivary protein.